We begin with the raw amino-acid sequence, 830 residues long: Ribosome biogenesis protein ERB1 (830 aa).

The segment at 1 to 142 (MAPQPLKVGT…NKDLPVDEKL (142 aa)) is disordered. Acidic residues-rich tracts occupy residues 35–44 (VSEESDEEFG) and 52–109 (MSDD…DSDS). A compositionally biased stretch (basic and acidic residues) spans 131–142 (EENKDLPVDEKL). WD repeat units lie at residues 481 to 520 (PGDTRVRSVSTSPDGQWIASGSEDGVVRVWDLGNGREVWR), 523 to 563 (LHAG…APHI), 660 to 698 (KTPGTIQRVAFHPSKPHFFAATQRYIRLYDLAAQKLIRT), 701 to 740 (SGVKWISSMDVHSGGDNLIIGSYDKKLAWFDMDLSAKPYK), 744 to 783 (YHNRALRSVAYHPTLPLFASASDDGTVHIFHCTVYTDLMQ), and 799 to 830 (IDGIGVLDLRWVPGKPWLVSSGADGEVRLWCS).

It belongs to the WD repeat BOP1/ERB1 family. In terms of assembly, component of the NOP7 complex, composed of ERB1, NOP7 and YTM1. The complex is held together by ERB1, which interacts with NOP7 via its N-terminal domain and with YTM1 via a high-affinity interaction between the seven-bladed beta-propeller domains of the 2 proteins. The NOP7 complex associates with the 66S pre-ribosome.

Its subcellular location is the nucleus. It is found in the nucleolus. It localises to the nucleoplasm. In terms of biological role, component of the NOP7 complex, which is required for maturation of the 25S and 5.8S ribosomal RNAs and formation of the 60S ribosome. The protein is Ribosome biogenesis protein ERB1 of Cryptococcus neoformans var. neoformans serotype D (strain JEC21 / ATCC MYA-565) (Filobasidiella neoformans).